The following is a 207-amino-acid chain: Large ribosomal subunit protein uL4 (207 aa).

The disordered stretch occupies residues 43–80 (RRRSGTAKSKGRSEVSGSTRKLYRQKGTGNARSGSVKS). Positions 69 to 78 (GTGNARSGSV) are enriched in polar residues.

The protein belongs to the universal ribosomal protein uL4 family. As to quaternary structure, part of the 50S ribosomal subunit.

Its function is as follows. One of the primary rRNA binding proteins, this protein initially binds near the 5'-end of the 23S rRNA. It is important during the early stages of 50S assembly. It makes multiple contacts with different domains of the 23S rRNA in the assembled 50S subunit and ribosome. Forms part of the polypeptide exit tunnel. The sequence is that of Large ribosomal subunit protein uL4 from Desulforapulum autotrophicum (strain ATCC 43914 / DSM 3382 / VKM B-1955 / HRM2) (Desulfobacterium autotrophicum).